Reading from the N-terminus, the 382-residue chain is Succinate--CoA ligase [ADP-forming] subunit beta (382 aa).

In terms of domain architecture, ATP-grasp spans 9–240 (KELFAKYGVK…PRDITEFEAY (232 aa)). Residues Lys-45, 52–54 (GRG), Leu-94, and Glu-99 each bind ATP. The Mg(2+) site is built by Asn-193 and Asp-207. Substrate contacts are provided by residues Asn-260 and 317 to 319 (GIT).

Belongs to the succinate/malate CoA ligase beta subunit family. As to quaternary structure, heterotetramer of two alpha and two beta subunits. It depends on Mg(2+) as a cofactor.

It carries out the reaction succinate + ATP + CoA = succinyl-CoA + ADP + phosphate. The enzyme catalyses GTP + succinate + CoA = succinyl-CoA + GDP + phosphate. It functions in the pathway carbohydrate metabolism; tricarboxylic acid cycle; succinate from succinyl-CoA (ligase route): step 1/1. Functionally, succinyl-CoA synthetase functions in the citric acid cycle (TCA), coupling the hydrolysis of succinyl-CoA to the synthesis of either ATP or GTP and thus represents the only step of substrate-level phosphorylation in the TCA. The beta subunit provides nucleotide specificity of the enzyme and binds the substrate succinate, while the binding sites for coenzyme A and phosphate are found in the alpha subunit. The chain is Succinate--CoA ligase [ADP-forming] subunit beta from Pyrobaculum calidifontis (strain DSM 21063 / JCM 11548 / VA1).